Consider the following 760-residue polypeptide: Formin-like protein 8 (760 aa).

Positions 1–29 (MAAMFNHPWPNLTLIYFFFIVVLPFQSLS) are cleaved as a signal peptide. The span at 52–63 (PLLPPSSNPSPP) shows a compositional bias: pro residues. The interval 52 to 71 (PLLPPSSNPSPPSNNSSSSD) is disordered. The chain crosses the membrane as a helical span at residues 78–98 (AVLITAASTLLVAGVFFFCLQ). Residues 204-313 (TEIPLLRGRS…VKLKPLHWDK (110 aa)) are disordered. The span at 253-274 (TPSPPPPIKKGSSPSPPPPPPV) shows a compositional bias: pro residues. One can recognise an FH2 domain in the interval 296 to 732 (SGGETSKQVK…GSPISPSSQR (437 aa)).

This sequence belongs to the formin-like family. Class-I subfamily. As to quaternary structure, interacts with profilin.

It is found in the cell membrane. Its function is as follows. Might be involved in the organization and polarity of the actin cytoskeleton. Interacts with the barbed end of actin filaments and nucleates actin-filament polymerization in vitro. The protein is Formin-like protein 8 (FH8) of Arabidopsis thaliana (Mouse-ear cress).